We begin with the raw amino-acid sequence, 908 residues long: Translation initiation factor IF-2 (908 aa).

Disordered regions lie at residues proline 122–alanine 180 and glutamate 203–lysine 267. Acidic residues predominate over residues valine 132–glutamate 143. Positions glutamate 157–valine 166 are enriched in low complexity. Basic and acidic residues predominate over residues alanine 223–glutamate 248. The span at lysine 256–lysine 267 shows a compositional bias: basic residues. The tr-type G domain occupies proline 409–serine 578. The interval glycine 418–threonine 425 is G1. Glycine 418–threonine 425 is a GTP binding site. Residues glycine 443–histidine 447 are G2. Residues aspartate 464–glycine 467 form a G3 region. Residues aspartate 464 to histidine 468 and asparagine 518 to aspartate 521 contribute to the GTP site. The tract at residues asparagine 518–aspartate 521 is G4. Positions serine 554 to histidine 556 are G5.

The protein belongs to the TRAFAC class translation factor GTPase superfamily. Classic translation factor GTPase family. IF-2 subfamily.

The protein localises to the cytoplasm. One of the essential components for the initiation of protein synthesis. Protects formylmethionyl-tRNA from spontaneous hydrolysis and promotes its binding to the 30S ribosomal subunits. Also involved in the hydrolysis of GTP during the formation of the 70S ribosomal complex. This Saccharophagus degradans (strain 2-40 / ATCC 43961 / DSM 17024) protein is Translation initiation factor IF-2.